A 103-amino-acid chain; its full sequence is Large ribosomal subunit protein bL21 (103 aa).

Belongs to the bacterial ribosomal protein bL21 family. Part of the 50S ribosomal subunit. Contacts protein L20.

This protein binds to 23S rRNA in the presence of protein L20. In Actinobacillus pleuropneumoniae serotype 5b (strain L20), this protein is Large ribosomal subunit protein bL21.